The sequence spans 237 residues: Thiamine-phosphate synthase (237 aa).

Residues 41 to 45 (QLRDK) and Asn73 contribute to the 4-amino-2-methyl-5-(diphosphooxymethyl)pyrimidine site. Mg(2+) contacts are provided by Asp74 and Asp93. Ser112 is a binding site for 4-amino-2-methyl-5-(diphosphooxymethyl)pyrimidine. 143-145 (TPT) provides a ligand contact to 2-[(2R,5Z)-2-carboxy-4-methylthiazol-5(2H)-ylidene]ethyl phosphate. Lys146 serves as a coordination point for 4-amino-2-methyl-5-(diphosphooxymethyl)pyrimidine. Position 192 (Gly192) interacts with 2-[(2R,5Z)-2-carboxy-4-methylthiazol-5(2H)-ylidene]ethyl phosphate.

The protein belongs to the thiamine-phosphate synthase family. Mg(2+) serves as cofactor.

It catalyses the reaction 2-[(2R,5Z)-2-carboxy-4-methylthiazol-5(2H)-ylidene]ethyl phosphate + 4-amino-2-methyl-5-(diphosphooxymethyl)pyrimidine + 2 H(+) = thiamine phosphate + CO2 + diphosphate. It carries out the reaction 2-(2-carboxy-4-methylthiazol-5-yl)ethyl phosphate + 4-amino-2-methyl-5-(diphosphooxymethyl)pyrimidine + 2 H(+) = thiamine phosphate + CO2 + diphosphate. The enzyme catalyses 4-methyl-5-(2-phosphooxyethyl)-thiazole + 4-amino-2-methyl-5-(diphosphooxymethyl)pyrimidine + H(+) = thiamine phosphate + diphosphate. The protein operates within cofactor biosynthesis; thiamine diphosphate biosynthesis; thiamine phosphate from 4-amino-2-methyl-5-diphosphomethylpyrimidine and 4-methyl-5-(2-phosphoethyl)-thiazole: step 1/1. Condenses 4-methyl-5-(beta-hydroxyethyl)thiazole monophosphate (THZ-P) and 2-methyl-4-amino-5-hydroxymethyl pyrimidine pyrophosphate (HMP-PP) to form thiamine monophosphate (TMP). This chain is Thiamine-phosphate synthase, found in Arthrobacter sp. (strain FB24).